The primary structure comprises 386 residues: Trichocyst matrix protein T2-B (386 aa).

Residues 1-19 form the signal peptide; sequence MKTIILALALIALVSSTQS. Residues 20–48 constitute a propeptide that is removed on maturation; it reads DVIDTIKKIDQSPFGRTLFDTIWLELQTG. The stretch at 51-154 forms a coiled coil; it reads LDRLVSTLTD…AEEHEDFEEK (104 aa). The propeptide occupies 184-238; the sequence is KGKAAKQPHKFTKDVANLIQKHFTTSAKKTAKFQHRKGYSKLFKAFATIASKVEQ. Residues 294 to 325 are a coiled coil; it reads ALANAISDLAALNDIIAQVEASLDTTVQRIEN.

This sequence belongs to the TMP family.

The protein localises to the trichocyst. Functionally, structural protein that crystallize inside the trichocyst matrix. This Paramecium tetraurelia protein is Trichocyst matrix protein T2-B (T2B).